The primary structure comprises 155 residues: NADPH-dependent 7-cyano-7-deazaguanine reductase (155 aa).

Residues 1-20 (MMPNTDVSSLSMLGQQTETA) are compositionally biased toward polar residues. The segment at 1–26 (MMPNTDVSSLSMLGQQTETAKSPEEA) is disordered. The active-site Thioimide intermediate is the Cys53. Asp60 functions as the Proton donor in the catalytic mechanism. Residues 75-77 (VES) and 94-95 (HE) contribute to the substrate site.

The protein belongs to the GTP cyclohydrolase I family. QueF type 1 subfamily.

The protein resides in the cytoplasm. It carries out the reaction 7-aminomethyl-7-carbaguanine + 2 NADP(+) = 7-cyano-7-deazaguanine + 2 NADPH + 3 H(+). It participates in tRNA modification; tRNA-queuosine biosynthesis. Functionally, catalyzes the NADPH-dependent reduction of 7-cyano-7-deazaguanine (preQ0) to 7-aminomethyl-7-deazaguanine (preQ1). The protein is NADPH-dependent 7-cyano-7-deazaguanine reductase of Rhizobium etli (strain CIAT 652).